A 169-amino-acid polypeptide reads, in one-letter code: Peptide deformylase 1 (169 aa).

Residues cysteine 93 and histidine 135 each contribute to the Fe cation site. Residue glutamate 136 is part of the active site. Histidine 139 serves as a coordination point for Fe cation.

The protein belongs to the polypeptide deformylase family. Requires Fe(2+) as cofactor.

The enzyme catalyses N-terminal N-formyl-L-methionyl-[peptide] + H2O = N-terminal L-methionyl-[peptide] + formate. Removes the formyl group from the N-terminal Met of newly synthesized proteins. Requires at least a dipeptide for an efficient rate of reaction. N-terminal L-methionine is a prerequisite for activity but the enzyme has broad specificity at other positions. This Corynebacterium glutamicum (strain ATCC 13032 / DSM 20300 / JCM 1318 / BCRC 11384 / CCUG 27702 / LMG 3730 / NBRC 12168 / NCIMB 10025 / NRRL B-2784 / 534) protein is Peptide deformylase 1.